A 462-amino-acid polypeptide reads, in one-letter code: Asparagine--tRNA ligase (462 aa).

Belongs to the class-II aminoacyl-tRNA synthetase family. Homodimer.

The protein localises to the cytoplasm. The catalysed reaction is tRNA(Asn) + L-asparagine + ATP = L-asparaginyl-tRNA(Asn) + AMP + diphosphate + H(+). In Borreliella afzelii (strain PKo) (Borrelia afzelii), this protein is Asparagine--tRNA ligase.